The sequence spans 620 residues: Chaperone protein HscA homolog (620 aa).

The protein belongs to the heat shock protein 70 family.

Its function is as follows. Chaperone involved in the maturation of iron-sulfur cluster-containing proteins. Has a low intrinsic ATPase activity which is markedly stimulated by HscB. The chain is Chaperone protein HscA homolog from Neisseria meningitidis serogroup B (strain ATCC BAA-335 / MC58).